Consider the following 939-residue polypeptide: Isoleucine--tRNA ligase (939 aa).

A 'HIGH' region motif is present at residues Pro58–His68. Glu562 lines the L-isoleucyl-5'-AMP pocket. Residues Lys603–Ser607 carry the 'KMSKS' region motif. Lys606 is an ATP binding site. Zn(2+) is bound by residues Cys903, Cys906, Cys922, and Cys925.

It belongs to the class-I aminoacyl-tRNA synthetase family. IleS type 1 subfamily. Monomer. Zn(2+) serves as cofactor.

Its subcellular location is the cytoplasm. The enzyme catalyses tRNA(Ile) + L-isoleucine + ATP = L-isoleucyl-tRNA(Ile) + AMP + diphosphate. Its function is as follows. Catalyzes the attachment of isoleucine to tRNA(Ile). As IleRS can inadvertently accommodate and process structurally similar amino acids such as valine, to avoid such errors it has two additional distinct tRNA(Ile)-dependent editing activities. One activity is designated as 'pretransfer' editing and involves the hydrolysis of activated Val-AMP. The other activity is designated 'posttransfer' editing and involves deacylation of mischarged Val-tRNA(Ile). This Buchnera aphidicola subsp. Baizongia pistaciae (strain Bp) protein is Isoleucine--tRNA ligase.